We begin with the raw amino-acid sequence, 700 residues long: Elongation factor G 1 (700 aa).

The 283-residue stretch at 8–290 folds into the tr-type G domain; that stretch reads ERYRNIGISA…AVIDYLPSPA (283 aa). Residues 17-24, 88-92, and 142-145 contribute to the GTP site; these read AHIDAGKT, DTPGH, and NKMD.

This sequence belongs to the TRAFAC class translation factor GTPase superfamily. Classic translation factor GTPase family. EF-G/EF-2 subfamily.

The protein localises to the cytoplasm. Catalyzes the GTP-dependent ribosomal translocation step during translation elongation. During this step, the ribosome changes from the pre-translocational (PRE) to the post-translocational (POST) state as the newly formed A-site-bound peptidyl-tRNA and P-site-bound deacylated tRNA move to the P and E sites, respectively. Catalyzes the coordinated movement of the two tRNA molecules, the mRNA and conformational changes in the ribosome. In Bordetella bronchiseptica (strain ATCC BAA-588 / NCTC 13252 / RB50) (Alcaligenes bronchisepticus), this protein is Elongation factor G 1.